Reading from the N-terminus, the 773-residue chain is Cellobiose dehydrogenase (773 aa).

A signal peptide spans 1-18 (MLGRSLLALLPFVGLAFS). Glutamine 19 is modified (pyrrolidone carboxylic acid). The interval 19-208 (QSASQFTDPT…YQNYLNGDSG (190 aa)) is heme domain. Heme contacts are provided by methionine 83 and histidine 181. A disordered region spans residues 203–227 (LNGDSGNPTTTSTKPTSTSSSVTTG). Residues 210-227 (PTTTSTKPTSTSSSVTTG) show a composition bias toward low complexity. Positions 235–773 (YDYIIVGAGP…AKILALAGGP (539 aa)) are oxidoreductase. 236-265 (DYIIVGAGPGGIIAADRLSEAGKKVLLLER) serves as a coordination point for FAD. Histidine 707 serves as the catalytic Proton acceptor.

In the C-terminal section; belongs to the GMC oxidoreductase family. The cofactor is FAD. Heme serves as cofactor.

Its subcellular location is the secreted. The enzyme catalyses D-cellobiose + A = D-cellobiono-1,5-lactone + AH2. In terms of biological role, degrades both lignin and cellulose. Oxidizes cellobiose to cellobionolactone. The chain is Cellobiose dehydrogenase (CDH-1) from Phanerodontia chrysosporium (White-rot fungus).